We begin with the raw amino-acid sequence, 398 residues long: Phytoene synthase 2, chloroplastic (398 aa).

A chloroplast-targeting transit peptide spans Met-1–Arg-80.

Belongs to the phytoene/squalene synthase family. Expressed in leaves and endosperm. Expressed in developing leaves.

It is found in the plastid. Its subcellular location is the chloroplast membrane. It localises to the chloroplast. The protein resides in the plastoglobule. The enzyme catalyses 2 (2E,6E,10E)-geranylgeranyl diphosphate = 15-cis-phytoene + 2 diphosphate. In terms of biological role, catalyzes the conversion of geranylgeranyl diphosphate to phytoene. Mediates the first committed step in carotenoid biosynthesis. The protein is Phytoene synthase 2, chloroplastic of Oryza sativa subsp. japonica (Rice).